Here is a 202-residue protein sequence, read N- to C-terminus: ATP-dependent Clp protease proteolytic subunit (202 aa).

Ser-106 acts as the Nucleophile in catalysis. Residue His-131 is part of the active site.

Belongs to the peptidase S14 family. In terms of assembly, fourteen ClpP subunits assemble into 2 heptameric rings which stack back to back to give a disk-like structure with a central cavity, resembling the structure of eukaryotic proteasomes.

It localises to the cytoplasm. It carries out the reaction Hydrolysis of proteins to small peptides in the presence of ATP and magnesium. alpha-casein is the usual test substrate. In the absence of ATP, only oligopeptides shorter than five residues are hydrolyzed (such as succinyl-Leu-Tyr-|-NHMec, and Leu-Tyr-Leu-|-Tyr-Trp, in which cleavage of the -Tyr-|-Leu- and -Tyr-|-Trp bonds also occurs).. In terms of biological role, cleaves peptides in various proteins in a process that requires ATP hydrolysis. Has a chymotrypsin-like activity. Plays a major role in the degradation of misfolded proteins. This is ATP-dependent Clp protease proteolytic subunit from Verminephrobacter eiseniae (strain EF01-2).